Consider the following 511-residue polypeptide: 2,3-bisphosphoglycerate-independent phosphoglycerate mutase (511 aa).

The Mn(2+) site is built by D12 and S62. S62 functions as the Phosphoserine intermediate in the catalytic mechanism. Residues H123, 153 to 154 (RD), R185, R191, 260 to 263 (RPDR), and K333 contribute to the substrate site. Residues D400, H404, D441, H442, and H460 each contribute to the Mn(2+) site.

This sequence belongs to the BPG-independent phosphoglycerate mutase family. In terms of assembly, monomer. It depends on Mn(2+) as a cofactor.

It catalyses the reaction (2R)-2-phosphoglycerate = (2R)-3-phosphoglycerate. It functions in the pathway carbohydrate degradation; glycolysis; pyruvate from D-glyceraldehyde 3-phosphate: step 3/5. Catalyzes the interconversion of 2-phosphoglycerate and 3-phosphoglycerate. In Clostridium novyi (strain NT), this protein is 2,3-bisphosphoglycerate-independent phosphoglycerate mutase.